The primary structure comprises 816 residues: Auxin response factor 12 (816 aa).

Residues 1–10 (MSSSSAASIG) show a composition bias toward low complexity. Residues 1 to 24 (MSSSSAASIGPPQPPPPPAPPEEE) are disordered. The segment covering 11 to 20 (PPQPPPPPAP) has biased composition (pro residues). Residues 135-237 (FCKTLTASDT…QLLLGIRRAS (103 aa)) constitute a DNA-binding region (TF-B3). Residues 526–565 (NDQKQKIQPDQSYQVPTSAVLPSPTSLPSHLREKFGFSDP) are disordered. Residues 717–801 (RTFVKVYKSG…WYIKILSPED (85 aa)) form the PB1 domain.

Belongs to the ARF family. In terms of assembly, homodimers and heterodimers.

Its subcellular location is the nucleus. Its function is as follows. Auxin response factors (ARFs) are transcriptional factors that bind specifically to the DNA sequence 5'-TGTCTC-3' found in the auxin-responsive promoter elements (AuxREs). This is Auxin response factor 12 (ARF12) from Oryza sativa subsp. indica (Rice).